Reading from the N-terminus, the 89-residue chain is Helix-loop-helix protein 15 (89 aa).

A disordered region spans residues 1–32 (MLMEDGGLDTTSEEYRKLSKAERRKRRRATPK). The span at 22 to 32 (ERRKRRRATPK) shows a compositional bias: basic residues. Positions 32 to 45 (KYRNLHATRERIRV) are basic motif. Positions 32–84 (KYRNLHATRERIRVESFNMAFSQLRALLPTLPVEKKLSKIEILRFSIAYISFL) constitute a bHLH domain. The tract at residues 46–84 (ESFNMAFSQLRALLPTLPVEKKLSKIEILRFSIAYISFL) is helix-loop-helix motif.

In terms of tissue distribution, expressed in sensory head neurons of the lateral ganglion.

It is found in the nucleus. In terms of biological role, transcription factor which binds the E box motif 5'-CA[TC][AG]TG-3'. Involved in modulating physiological aging, probably by regulating expression of branched-chain amino acid transferase-1, bcat-1. This is Helix-loop-helix protein 15 from Caenorhabditis elegans.